The following is a 93-amino-acid chain: UPF0358 protein BPUM_1375 (93 aa).

It belongs to the UPF0358 family.

This chain is UPF0358 protein BPUM_1375, found in Bacillus pumilus (strain SAFR-032).